Consider the following 573-residue polypeptide: NEDD4-binding protein 3-B (573 aa).

Disordered stretches follow at residues Glu119 to Pro138, Cys173 to Ser220, and Gly384 to Asp405. Basic and acidic residues predominate over residues Leu125–Arg135. The segment covering Ser186–Ser196 has biased composition (low complexity). Polar residues-rich tracts occupy residues Asp207 to Ser220 and Lys392 to Pro401. The stretch at Glu287 to Ser474 forms a coiled coil.

Belongs to the N4BP3 family.

It is found in the cytoplasmic vesicle. It localises to the cell projection. Its subcellular location is the axon. The protein resides in the dendrite. In terms of biological role, plays a role in axon and dendrite arborization during cranial nerve development. Also important for neural crest migration and early development of other anterior structures including eye, brain and cranial cartilage. This Xenopus laevis (African clawed frog) protein is NEDD4-binding protein 3-B.